We begin with the raw amino-acid sequence, 318 residues long: Myoblast determination protein 1 (318 aa).

Met1 participates in a covalent cross-link: Peptide (Met-Gly) (interchain with G-Cter in ubiquitin). Lys104 is modified (N6-methyllysine; by EHMT2). Residues Asp109–Leu160 form the bHLH domain. Disordered regions lie at residues Ala175–Gly224 and Ser262–Leu318. Residues Ser196 to Ser206 are compositionally biased toward polar residues. A compositionally biased stretch (low complexity) spans Ser262–Pro271. The segment covering Asp272 to Pro282 has biased composition (pro residues). The span at Ala290 to Gln304 shows a compositional bias: polar residues.

Efficient DNA binding requires dimerization with another bHLH protein. Seems to form active heterodimers with ITF-2. Interacts with SUV39H1. Interacts with DDX5. Interacts with CHD2. Interacts with TSC22D3. Interacts with SETD3. Interacts with P-TEFB complex; promotes the transcriptional activity of MYOD1 through its CDK9-mediated phosphorylation. Interacts with CSRP3. Interacts with NUPR1. In terms of processing, phosphorylated by CDK9. This phosphorylation promotes its function in muscle differentiation. Post-translationally, acetylated by a complex containing EP300 and PCAF. The acetylation is essential to activate target genes. Conversely, its deacetylation by SIRT1 inhibits its function. Ubiquitinated on the N-terminus; which is required for proteasomal degradation. In terms of processing, methylation at Lys-104 by EHMT2/G9a inhibits myogenic activity.

It localises to the nucleus. In terms of biological role, acts as a transcriptional activator that promotes transcription of muscle-specific target genes and plays a role in muscle differentiation. Together with MYF5 and MYOG, co-occupies muscle-specific gene promoter core region during myogenesis. Induces fibroblasts to differentiate into myoblasts. Interacts with and is inhibited by the twist protein. This interaction probably involves the basic domains of both proteins. The chain is Myoblast determination protein 1 (Myod1) from Rattus norvegicus (Rat).